A 64-amino-acid polypeptide reads, in one-letter code: Cytochrome c oxidase subunit 5C-2 (64 aa).

The helical transmembrane segment at 15 to 34 (SVVKELVIGTVLGLAAGGLW) threads the bilayer.

It belongs to the cytochrome c oxidase subunit 5C family.

The protein localises to the mitochondrion inner membrane. Its function is as follows. This protein is one of the nuclear-coded polypeptide chains of cytochrome c oxidase, the terminal oxidase in mitochondrial electron transport. The chain is Cytochrome c oxidase subunit 5C-2 (COX5C2) from Helianthus annuus (Common sunflower).